The sequence spans 162 residues: 2-C-methyl-D-erythritol 2,4-cyclodiphosphate synthase (162 aa).

The a divalent metal cation site is built by aspartate 9 and histidine 11. 4-CDP-2-C-methyl-D-erythritol 2-phosphate is bound by residues 9–11 (DVH) and 37–38 (HS). Position 45 (histidine 45) interacts with a divalent metal cation.

Belongs to the IspF family. As to quaternary structure, homotrimer. A divalent metal cation is required as a cofactor.

It catalyses the reaction 4-CDP-2-C-methyl-D-erythritol 2-phosphate = 2-C-methyl-D-erythritol 2,4-cyclic diphosphate + CMP. It participates in isoprenoid biosynthesis; isopentenyl diphosphate biosynthesis via DXP pathway; isopentenyl diphosphate from 1-deoxy-D-xylulose 5-phosphate: step 4/6. Involved in the biosynthesis of isopentenyl diphosphate (IPP) and dimethylallyl diphosphate (DMAPP), two major building blocks of isoprenoid compounds. Catalyzes the conversion of 4-diphosphocytidyl-2-C-methyl-D-erythritol 2-phosphate (CDP-ME2P) to 2-C-methyl-D-erythritol 2,4-cyclodiphosphate (ME-CPP) with a corresponding release of cytidine 5-monophosphate (CMP). The sequence is that of 2-C-methyl-D-erythritol 2,4-cyclodiphosphate synthase from Petrotoga mobilis (strain DSM 10674 / SJ95).